A 323-amino-acid polypeptide reads, in one-letter code: HPr kinase/phosphorylase (323 aa).

Catalysis depends on residues His-146 and Lys-167. 161-168 (GESGLGKS) is an ATP binding site. Ser-168 serves as a coordination point for Mg(2+). The active-site Proton acceptor; for phosphorylation activity. Proton donor; for dephosphorylation activity is Asp-185. The segment at 209-218 (LEVRGLGLLD) is important for the catalytic mechanism of both phosphorylation and dephosphorylation. Glu-210 provides a ligand contact to Mg(2+). The active site involves Arg-250. The important for the catalytic mechanism of dephosphorylation stretch occupies residues 271-276 (QVAAGR).

The protein belongs to the HPrK/P family. Homohexamer. Requires Mg(2+) as cofactor.

The enzyme catalyses [HPr protein]-L-serine + ATP = [HPr protein]-O-phospho-L-serine + ADP + H(+). It carries out the reaction [HPr protein]-O-phospho-L-serine + phosphate + H(+) = [HPr protein]-L-serine + diphosphate. Functionally, catalyzes the ATP- as well as the pyrophosphate-dependent phosphorylation of a specific serine residue in HPr, a phosphocarrier protein of the phosphoenolpyruvate-dependent sugar phosphotransferase system (PTS). HprK/P also catalyzes the pyrophosphate-producing, inorganic phosphate-dependent dephosphorylation (phosphorolysis) of seryl-phosphorylated HPr (P-Ser-HPr). This chain is HPr kinase/phosphorylase, found in Cupriavidus necator (strain ATCC 17699 / DSM 428 / KCTC 22496 / NCIMB 10442 / H16 / Stanier 337) (Ralstonia eutropha).